The sequence spans 133 residues: S-protein homolog 21 (133 aa).

An N-terminal signal peptide occupies residues 1–21; the sequence is MKNLSIFLFVVGLCMISDVYG.

It belongs to the plant self-incompatibility (S1) protein family.

It localises to the secreted. This is S-protein homolog 21 from Arabidopsis thaliana (Mouse-ear cress).